We begin with the raw amino-acid sequence, 277 residues long: Inositol monophosphatase 1 (277 aa).

Residues Glu70, Asp90, Ile92, and Asp93 each coordinate Mg(2+). Glu70 contributes to the substrate binding site. Substrate contacts are provided by residues Ile92–Thr95, Gly194–Ala196, Glu213, and Asp220. Asp220 lines the Mg(2+) pocket.

This sequence belongs to the inositol monophosphatase superfamily. As to quaternary structure, homodimer. It depends on Mg(2+) as a cofactor. In terms of tissue distribution, ubiquitous.

The protein resides in the cytoplasm. It carries out the reaction a myo-inositol phosphate + H2O = myo-inositol + phosphate. The enzyme catalyses 1D-myo-inositol 1-phosphate + H2O = myo-inositol + phosphate. The catalysed reaction is 1D-myo-inositol 2-phosphate + H2O = myo-inositol + phosphate. It catalyses the reaction 1D-myo-inositol 3-phosphate + H2O = myo-inositol + phosphate. It carries out the reaction 1D-myo-inositol 4-phosphate + H2O = myo-inositol + phosphate. The enzyme catalyses 1D-myo-inositol 5-phosphate + H2O = myo-inositol + phosphate. The catalysed reaction is 1D-myo-inositol 6-phosphate + H2O = myo-inositol + phosphate. It catalyses the reaction scyllo-inositol 1-phosphate + H2O = scyllo-inositol + phosphate. It carries out the reaction alpha-D-galactose 1-phosphate + H2O = D-galactose + phosphate. The enzyme catalyses alpha-D-glucose 1-phosphate + H2O = D-glucose + phosphate. The catalysed reaction is D-glucose 6-phosphate + H2O = D-glucose + phosphate. It catalyses the reaction beta-D-fructose 1-phosphate + H2O = D-fructose + phosphate. It carries out the reaction glycerol 2-phosphate + H2O = glycerol + phosphate. The enzyme catalyses adenosine 2'-phosphate + H2O = adenosine + phosphate. The protein operates within polyol metabolism; myo-inositol biosynthesis; myo-inositol from D-glucose 6-phosphate: step 2/2. With respect to regulation, activity with myo-inositol monophosphate and D-galactose 1-phosphate is inhibited by Li(+), Ca(2+) and Mn(2+), but also by Mg(2+) at concentrations above 3 mM. Functionally, phosphatase involved in the dephosphorylation of myo-inositol monophosphate to generate myo-inositol. Is also able to dephosphorylate scyllo-inositol-phosphate, myo-inositol 1,4-diphosphate, scyllo-inositol-1,3-diphosphate and scyllo-inositol-1,4-diphosphate. Also dephosphorylates in vitro other sugar-phosphates including D-galactose-1-phosphate, glucose-1-phosphate, glucose-6-phosphate, fructose-1-phosphate, beta-glycerophosphate and 2'-AMP. Responsible for the provision of inositol required for synthesis of phosphatidylinositol and polyphosphoinositides, and involved in maintaining normal brain function. Has been implicated as the pharmacological target for lithium Li(+) action in brain. Is equally active with myo-inositol monophosphate and D-galactose 1-phosphate. The polypeptide is Inositol monophosphatase 1 (Impa1) (Rattus norvegicus (Rat)).